The following is a 155-amino-acid chain: Ribosomal RNA large subunit methyltransferase H 1 (155 aa).

S-adenosyl-L-methionine is bound by residues Leu-76, Gly-108, and 127 to 132 (FSKMTF).

Belongs to the RNA methyltransferase RlmH family. As to quaternary structure, homodimer.

It localises to the cytoplasm. It carries out the reaction pseudouridine(1915) in 23S rRNA + S-adenosyl-L-methionine = N(3)-methylpseudouridine(1915) in 23S rRNA + S-adenosyl-L-homocysteine + H(+). In terms of biological role, specifically methylates the pseudouridine at position 1915 (m3Psi1915) in 23S rRNA. The protein is Ribosomal RNA large subunit methyltransferase H 1 of Thermoanaerobacter pseudethanolicus (strain ATCC 33223 / 39E) (Clostridium thermohydrosulfuricum).